A 576-amino-acid chain; its full sequence is Sulfite reductase [NADPH] hemoprotein beta-component (576 aa).

Cys435, Cys441, Cys480, and Cys484 together coordinate [4Fe-4S] cluster. Cys484 contributes to the siroheme binding site.

The protein belongs to the nitrite and sulfite reductase 4Fe-4S domain family. In terms of assembly, alpha(8)-beta(8). The alpha component is a flavoprotein, the beta component is a hemoprotein. It depends on siroheme as a cofactor. [4Fe-4S] cluster is required as a cofactor.

It carries out the reaction hydrogen sulfide + 3 NADP(+) + 3 H2O = sulfite + 3 NADPH + 4 H(+). Its pathway is sulfur metabolism; hydrogen sulfide biosynthesis; hydrogen sulfide from sulfite (NADPH route): step 1/1. In terms of biological role, component of the sulfite reductase complex that catalyzes the 6-electron reduction of sulfite to sulfide. This is one of several activities required for the biosynthesis of L-cysteine from sulfate. In Yersinia pseudotuberculosis serotype O:1b (strain IP 31758), this protein is Sulfite reductase [NADPH] hemoprotein beta-component.